A 388-amino-acid chain; its full sequence is Acyl-CoA dehydrogenase fadE12 (388 aa).

Belongs to the acyl-CoA dehydrogenase family. Requires FAD as cofactor.

The catalysed reaction is a 2,3-saturated acyl-CoA + A = a 2,3-dehydroacyl-CoA + AH2. The chain is Acyl-CoA dehydrogenase fadE12 (fadE12) from Mycobacterium bovis (strain ATCC BAA-935 / AF2122/97).